The chain runs to 441 residues: Ribosomal protein uS12 methylthiotransferase RimO (441 aa).

Positions 8 to 118 (PKIGFVSLGC…VLEHVHHYVP (111 aa)) constitute an MTTase N-terminal domain. [4Fe-4S] cluster-binding residues include cysteine 17, cysteine 53, cysteine 82, cysteine 150, cysteine 154, and cysteine 157. Residues 136–373 (LTPRHYAYLK…MQLQQQISAE (238 aa)) form the Radical SAM core domain. The TRAM domain occupies 376–441 (QEKVGREILV…DEYDLWGSRV (66 aa)).

It belongs to the methylthiotransferase family. RimO subfamily. [4Fe-4S] cluster serves as cofactor.

The protein localises to the cytoplasm. It catalyses the reaction L-aspartate(89)-[ribosomal protein uS12]-hydrogen + (sulfur carrier)-SH + AH2 + 2 S-adenosyl-L-methionine = 3-methylsulfanyl-L-aspartate(89)-[ribosomal protein uS12]-hydrogen + (sulfur carrier)-H + 5'-deoxyadenosine + L-methionine + A + S-adenosyl-L-homocysteine + 2 H(+). Functionally, catalyzes the methylthiolation of an aspartic acid residue of ribosomal protein uS12. This is Ribosomal protein uS12 methylthiotransferase RimO from Shigella sonnei (strain Ss046).